Reading from the N-terminus, the 217-residue chain is CASP-like protein UU4 (217 aa).

Residues 1-11 (MYTGQSDHRPE) are compositionally biased toward basic and acidic residues. The tract at residues 1 to 21 (MYTGQSDHRPEGVGVNPGSPN) is disordered. Residues 1–61 (MYTGQSDHRP…VKKNINHMSG (61 aa)) are Cytoplasmic-facing. Residues 62–82 (LSLGLRVSEFVLSVIAFSLMA) traverse the membrane as a helical segment. Residues 83-98 (SAEQNGAVYSTFTSYS) lie on the Extracellular side of the membrane. The helical transmembrane segment at 99-119 (FVLAINVLVALYAIGQIILSV) threads the bilayer. Topologically, residues 120–141 (MPLVSGSAPKKLYLFITFGCDQ) are cytoplasmic. A helical transmembrane segment spans residues 142–162 (LSAFLLMAAGAAGASVAMLIN). The Extracellular segment spans residues 163–187 (RKGVIDDYGSGCIDGKITVFCAHAE). A helical transmembrane segment spans residues 188-208 (ASIAFTFLSFFCVMISSYLGV). At 209–217 (YNLAPYLIL) the chain is on the cytoplasmic side.

It belongs to the Casparian strip membrane proteins (CASP) family. In terms of assembly, homodimer and heterodimers.

It is found in the cell membrane. The sequence is that of CASP-like protein UU4 from Physcomitrium patens (Spreading-leaved earth moss).